Here is a 425-residue protein sequence, read N- to C-terminus: Glutamate-1-semialdehyde 2,1-aminomutase (425 aa).

Lysine 265 is modified (N6-(pyridoxal phosphate)lysine).

This sequence belongs to the class-III pyridoxal-phosphate-dependent aminotransferase family. HemL subfamily. Homodimer. Pyridoxal 5'-phosphate is required as a cofactor.

It localises to the cytoplasm. The catalysed reaction is (S)-4-amino-5-oxopentanoate = 5-aminolevulinate. Its pathway is porphyrin-containing compound metabolism; protoporphyrin-IX biosynthesis; 5-aminolevulinate from L-glutamyl-tRNA(Glu): step 2/2. This is Glutamate-1-semialdehyde 2,1-aminomutase from Clostridium perfringens (strain ATCC 13124 / DSM 756 / JCM 1290 / NCIMB 6125 / NCTC 8237 / Type A).